A 943-amino-acid polypeptide reads, in one-letter code: Protein translocase subunit SecA (943 aa).

ATP is bound by residues Gln-90, 108 to 112, and Asp-509; that span reads GEGKT. A disordered region spans residues 535-564; the sequence is PDNEHKPPIPKQRNSKSKGGFSKKASSKLK.

The protein belongs to the SecA family. Monomer and homodimer. Part of the essential Sec protein translocation apparatus which comprises SecA, SecYEG and auxiliary proteins SecDF. Other proteins may also be involved.

The protein resides in the cell inner membrane. The protein localises to the cellular thylakoid membrane. Its subcellular location is the cytoplasm. It catalyses the reaction ATP + H2O + cellular proteinSide 1 = ADP + phosphate + cellular proteinSide 2.. In terms of biological role, part of the Sec protein translocase complex. Interacts with the SecYEG preprotein conducting channel. Has a central role in coupling the hydrolysis of ATP to the transfer of proteins into and across the cell membrane, serving as an ATP-driven molecular motor driving the stepwise translocation of polypeptide chains across the membrane. Functionally, probably participates in protein translocation into and across both the cytoplasmic and thylakoid membranes in cyanobacterial cells. This chain is Protein translocase subunit SecA, found in Prochlorococcus marinus (strain MIT 9215).